A 291-amino-acid polypeptide reads, in one-letter code: Diaminopimelate epimerase (291 aa).

Substrate contacts are provided by N13, Q46, and N66. Catalysis depends on C75, which acts as the Proton donor. Residues 76 to 77, N156, N189, and 207 to 208 contribute to the substrate site; these read GN and ER. Catalysis depends on C216, which acts as the Proton acceptor. 217 to 218 provides a ligand contact to substrate; it reads GS.

This sequence belongs to the diaminopimelate epimerase family. In terms of assembly, homodimer.

It is found in the cytoplasm. The enzyme catalyses (2S,6S)-2,6-diaminopimelate = meso-2,6-diaminopimelate. It functions in the pathway amino-acid biosynthesis; L-lysine biosynthesis via DAP pathway; DL-2,6-diaminopimelate from LL-2,6-diaminopimelate: step 1/1. In terms of biological role, catalyzes the stereoinversion of LL-2,6-diaminopimelate (L,L-DAP) to meso-diaminopimelate (meso-DAP), a precursor of L-lysine and an essential component of the bacterial peptidoglycan. The chain is Diaminopimelate epimerase from Rhodospirillum centenum (strain ATCC 51521 / SW).